A 49-amino-acid chain; its full sequence is Large ribosomal subunit protein bL33A (49 aa).

The protein belongs to the bacterial ribosomal protein bL33 family.

The chain is Large ribosomal subunit protein bL33A from Bacillus pumilus (strain SAFR-032).